The chain runs to 850 residues: AdoMet-dependent rRNA methyltransferase SPB1 (850 aa).

S-adenosyl-L-methionine contacts are provided by Gly-58, Trp-60, Asp-78, Asp-94, and Asp-119. Lys-159 functions as the Proton acceptor in the catalytic mechanism. Residues 273-282 (GETNEMTWTP) show a composition bias toward polar residues. Disordered regions lie at residues 273-305 (GETN…ARDE), 388-414 (IDKE…NEMK), 529-569 (GISD…RTLN), and 620-646 (AKKN…KQDD). A compositionally biased stretch (basic and acidic residues) spans 388 to 400 (IDKELSELGEREK). Positions 397–425 (EREKARKKRERRRRNEMKQREIQRMQMNM) form a coiled coil. Over residues 401–411 (ARKKRERRRRN) the composition is skewed to basic residues. Composition is skewed to acidic residues over residues 537–561 (DESD…DEDD) and 628–638 (SDSEDEEDDIV). Residues 746 to 773 (LEAKGRKKMRALRRLEQMKKKSELINED) are a coiled coil. Positions 811 to 850 (KNKGIAGRPRGVTGKYKMVDGTMKKEQRAIRRIKKKMGKK) are disordered. Over residues 840-850 (IRRIKKKMGKK) the composition is skewed to basic residues.

This sequence belongs to the class I-like SAM-binding methyltransferase superfamily. RNA methyltransferase RlmE family. SPB1 subfamily. In terms of assembly, component of the nucleolar and nucleoplasmic pre-60S ribosomal particle.

It is found in the nucleus. Its subcellular location is the nucleolus. The enzyme catalyses a ribonucleotide in rRNA + S-adenosyl-L-methionine = a 2'-O-methylribonucleotide in rRNA + S-adenosyl-L-homocysteine + H(+). Its function is as follows. Required for proper assembly of pre-ribosomal particles during the biogenesis of the 60S ribosomal subunit. This is AdoMet-dependent rRNA methyltransferase SPB1 from Yarrowia lipolytica (strain CLIB 122 / E 150) (Yeast).